The primary structure comprises 431 residues: Na(+)-translocating NADH-quinone reductase subunit F (431 aa).

A helical membrane pass occupies residues 10–30; sequence IFVASAAFCSLGLILVAVILL. Residues 41–133 form the 2Fe-2S ferredoxin-type domain; it reads CKLKINNDDS…DLCLEVEERY (93 aa). Cys-76, Cys-82, Cys-85, and Cys-117 together coordinate [2Fe-2S] cluster. Residues 136-286 form the FAD-binding FR-type domain; it reads ASSWEGTVVS…SGPYGESFMK (151 aa). The interval 289 to 413 is catalytic; that stretch reads NRPVIFLIGG…ALHNSSILTL (125 aa).

It belongs to the NqrF family. In terms of assembly, composed of six subunits; NqrA, NqrB, NqrC, NqrD, NqrE and NqrF. Requires [2Fe-2S] cluster as cofactor. FAD serves as cofactor.

Its subcellular location is the cell inner membrane. The catalysed reaction is a ubiquinone + n Na(+)(in) + NADH + H(+) = a ubiquinol + n Na(+)(out) + NAD(+). Functionally, NQR complex catalyzes the reduction of ubiquinone-1 to ubiquinol by two successive reactions, coupled with the transport of Na(+) ions from the cytoplasm to the periplasm. The first step is catalyzed by NqrF, which accepts electrons from NADH and reduces ubiquinone-1 to ubisemiquinone by a one-electron transfer pathway. This Chlamydia trachomatis serovar D (strain ATCC VR-885 / DSM 19411 / UW-3/Cx) protein is Na(+)-translocating NADH-quinone reductase subunit F.